The following is a 254-amino-acid chain: Nickel import ATP-binding protein NikD (254 aa).

In terms of domain architecture, ABC transporter spans 2–241; that stretch reads PQQIELRNIA…PKHAVTRSLV (240 aa). 36-43 serves as a coordination point for ATP; it reads GGSGSGKS.

It belongs to the ABC transporter superfamily. Nickel importer (TC 3.A.1.5.3) family. As to quaternary structure, the complex is composed of two ATP-binding proteins (NikD and NikE), two transmembrane proteins (NikB and NikC) and a solute-binding protein (NikA).

Its subcellular location is the cell inner membrane. The catalysed reaction is Ni(2+)(out) + ATP + H2O = Ni(2+)(in) + ADP + phosphate + H(+). Functionally, part of the ABC transporter complex NikABCDE involved in nickel import. Responsible for energy coupling to the transport system. This is Nickel import ATP-binding protein NikD from Shigella sonnei (strain Ss046).